The following is a 344-amino-acid chain: Anthranilate phosphoribosyltransferase (344 aa).

Residues glycine 84, 87–88 (GD), threonine 92, 94–97 (NIST), 112–120 (KHGGRSVSS), and serine 124 each bind 5-phospho-alpha-D-ribose 1-diphosphate. Glycine 84 provides a ligand contact to anthranilate. Serine 96 serves as a coordination point for Mg(2+). Arginine 170 provides a ligand contact to anthranilate. 2 residues coordinate Mg(2+): aspartate 229 and glutamate 230.

The protein belongs to the anthranilate phosphoribosyltransferase family. In terms of assembly, homodimer. The cofactor is Mg(2+).

The enzyme catalyses N-(5-phospho-beta-D-ribosyl)anthranilate + diphosphate = 5-phospho-alpha-D-ribose 1-diphosphate + anthranilate. The protein operates within amino-acid biosynthesis; L-tryptophan biosynthesis; L-tryptophan from chorismate: step 2/5. Its function is as follows. Catalyzes the transfer of the phosphoribosyl group of 5-phosphorylribose-1-pyrophosphate (PRPP) to anthranilate to yield N-(5'-phosphoribosyl)-anthranilate (PRA). In Janthinobacterium sp. (strain Marseille) (Minibacterium massiliensis), this protein is Anthranilate phosphoribosyltransferase.